The primary structure comprises 314 residues: Oxidoreductase NAD-binding domain-containing protein 1 (314 aa).

A signal peptide spans 1 to 18 (MALVAGSAAYQVLRGVTG). An FAD-binding FR-type domain is found at 63–166 (EIISPAKVCG…VGGEFCFDPQ (104 aa)). NAD(+) is bound at residue 180–185 (GVGINP).

The protein is Oxidoreductase NAD-binding domain-containing protein 1 (oxnad1) of Xenopus laevis (African clawed frog).